Here is a 681-residue protein sequence, read N- to C-terminus: Envelope glycoprotein (681 aa).

The signal sequence occupies residues methionine 1 to asparagine 18. Topologically, residues leucine 19–aspartate 648 are extracellular. 5 disulfide bridges follow: cysteine 37/cysteine 610, cysteine 92/cysteine 119, cysteine 211/cysteine 226, cysteine 512/cysteine 557, and cysteine 602/cysteine 609. The segment at serine 38–histidine 188 is receptor-binding. N-linked (GlcNAc...) asparagine; by host glycosylation is found at asparagine 94, asparagine 171, asparagine 190, asparagine 202, asparagine 207, asparagine 219, asparagine 223, and asparagine 255. Residues asparagine 223–histidine 427 form a disordered region. Polar residues-rich tracts occupy residues leucine 244–proline 259, threonine 281–leucine 290, and glycine 308–alanine 318. The tract at residues glutamate 277–proline 455 is mucin-like region. Residues asparagine 310, asparagine 313, asparagine 325, asparagine 326, asparagine 337, asparagine 344, asparagine 345, asparagine 350, asparagine 360, asparagine 408, and asparagine 487 are each glycosylated (N-linked (GlcNAc...) asparagine; by host). A compositionally biased stretch (low complexity) spans asparagine 337–serine 347. The segment covering lysine 348 to phenylalanine 414 has biased composition (polar residues). Residues glycine 529 to isoleucine 549 form a fusion peptide region. A glycan (N-linked (GlcNAc...) asparagine; by host) is linked at asparagine 564. Asparagine 619 carries N-linked (GlcNAc...) asparagine; by host glycosylation. A helical membrane pass occupies residues tryptophan 649–leucine 669. Residues serine 670–glycine 681 lie on the Cytoplasmic side of the membrane. S-palmitoyl cysteine; by host attachment occurs at residues cysteine 671 and cysteine 673.

It belongs to the filoviruses glycoprotein family. Homotrimer; each monomer consists of a GP1 and a GP2 subunit linked by disulfide bonds. The resulting peplomers (GP1,2) protrude from the virus surface as spikes. GP1,2 interacts with human CD209 and CLEC4M (collectively referred to as DC-SIGN(R)). Asialoglycoprotein receptor (ASGP-R) may be a liver-specific receptor for GP1,2. Members of the Tyro3 receptor tyrosine kinase family may be cell entry factors interacting with GP1,2. In terms of processing, N-glycosylated. Post-translationally, O-glycosylated in the mucin-like region. Specific enzymatic cleavages in vivo yield mature proteins. The precursor is processed into GP1 and GP2 by host cell furin in the trans Golgi, and maybe by other host proteases, to yield the mature GP1 and GP2 proteins. The cleavage site corresponds to the furin optimal cleavage sequence [KR]-X-[KR]-R. In terms of processing, GP1 is phosphorylated on serine residues between residues 260 and 273.

It is found in the virion membrane. The protein resides in the host cell membrane. Functionally, GP1 is responsible for binding to the receptor(s) on target cells. Interacts with CD209/DC-SIGN and CLEC4M/DC-SIGNR which act as cofactors for virus entry into the host cell. Binding to CD209 and CLEC4M, which are respectively found on dendritic cells (DCs), and on endothelial cells of liver sinusoids and lymph node sinuses, facilitate infection of macrophages and endothelial cells. These interactions not only facilitate virus cell entry, but also allow capture of viral particles by DCs and subsequent transmission to susceptible cells without DCs infection (trans infection). In terms of biological role, GP2 acts as a class I viral fusion protein. Under the current model, the protein has at least 3 conformational states: pre-fusion native state, pre-hairpin intermediate state, and post-fusion hairpin state. During viral and target cell membrane fusion, the coiled coil regions (heptad repeats) assume a trimer-of-hairpins structure, positioning the fusion peptide in close proximity to the C-terminal region of the ectodomain. The formation of this structure appears to drive apposition and subsequent fusion of viral and target cell membranes. Responsible for penetration of the virus into the cell cytoplasm by mediating the fusion of the membrane of the endocytosed virus particle with the endosomal membrane. Low pH in endosomes induces an irreversible conformational change in GP2, releasing the fusion hydrophobic peptide. The polypeptide is Envelope glycoprotein (GP) (Lake Victoria marburgvirus (strain Musoke-80) (MARV)).